The primary structure comprises 266 residues: Heat-inducible transcription repressor HrcA (266 aa).

Belongs to the HrcA family.

Negative regulator of class I heat shock genes (grpE-dnaK-dnaJ and groELS operons). Prevents heat-shock induction of these operons. The polypeptide is Heat-inducible transcription repressor HrcA (Helicobacter pylori (strain ATCC 700392 / 26695) (Campylobacter pylori)).